The following is a 326-amino-acid chain: tRNA uridine(34) hydroxylase (326 aa).

The 97-residue stretch at 122-218 folds into the Rhodanese domain; sequence EENRCLVLDV…YGQAVGTGKW (97 aa). The active-site Cysteine persulfide intermediate is Cys178.

This sequence belongs to the TrhO family.

It carries out the reaction uridine(34) in tRNA + AH2 + O2 = 5-hydroxyuridine(34) in tRNA + A + H2O. Its function is as follows. Catalyzes oxygen-dependent 5-hydroxyuridine (ho5U) modification at position 34 in tRNAs. In Chlamydia abortus (strain DSM 27085 / S26/3) (Chlamydophila abortus), this protein is tRNA uridine(34) hydroxylase.